Reading from the N-terminus, the 480-residue chain is Argininosuccinate lyase (480 aa).

The tract at residues 1 to 20 is disordered; sequence MTQQDGGQAGQAEPTKLWGG.

Belongs to the lyase 1 family. Argininosuccinate lyase subfamily.

It localises to the cytoplasm. It catalyses the reaction 2-(N(omega)-L-arginino)succinate = fumarate + L-arginine. Its pathway is amino-acid biosynthesis; L-arginine biosynthesis; L-arginine from L-ornithine and carbamoyl phosphate: step 3/3. The chain is Argininosuccinate lyase from Saccharopolyspora erythraea (strain ATCC 11635 / DSM 40517 / JCM 4748 / NBRC 13426 / NCIMB 8594 / NRRL 2338).